The following is a 691-amino-acid chain: NADH-ubiquinone oxidoreductase 75 kDa subunit (691 aa).

The 78-residue stretch at 1–78 (MVNVFVDGLS…NMKIFTNTPL (78 aa)) folds into the 2Fe-2S ferredoxin-type domain. [2Fe-2S] cluster is bound by residues cysteine 34, cysteine 45, cysteine 48, and cysteine 62. Positions 78–117 (LVKKAREGVLEFLLVNHPLDCPICDQGGECDLQDLTMVYG) constitute a 4Fe-4S His(Cys)3-ligated-type domain. Residues histidine 94, cysteine 98, cysteine 101, cysteine 107, cysteine 146, cysteine 149, cysteine 152, and cysteine 196 each coordinate [4Fe-4S] cluster. A 4Fe-4S Mo/W bis-MGD-type domain is found at 215–271 (LQSTESIDVSDAIGSNIRIDVRGSEIMRILPRLNEDVNEEWISDKARFCYDGLKRQR).

This sequence belongs to the complex I 75 kDa subunit family. As to quaternary structure, complex I is composed of about 30 different subunits. The cofactor is [2Fe-2S] cluster. [4Fe-4S] cluster serves as cofactor.

Its subcellular location is the mitochondrion inner membrane. The enzyme catalyses a ubiquinone + NADH + 5 H(+)(in) = a ubiquinol + NAD(+) + 4 H(+)(out). In terms of biological role, core subunit of the mitochondrial membrane respiratory chain NADH dehydrogenase (Complex I) that is believed to belong to the minimal assembly required for catalysis. Complex I functions in the transfer of electrons from NADH to the respiratory chain. The immediate electron acceptor for the enzyme is believed to be ubiquinone. This is the largest subunit of complex I and it is a component of the iron-sulfur (IP) fragment of the enzyme. It may form part of the active site crevice where NADH is oxidized. The protein is NADH-ubiquinone oxidoreductase 75 kDa subunit (NAD11) of Reclinomonas americana.